The chain runs to 205 residues: 3-demethoxyubiquinol 3-hydroxylase (205 aa).

The Fe cation site is built by Glu-54, Glu-84, His-87, Glu-136, Glu-168, and His-171.

The protein belongs to the COQ7 family. Requires Fe cation as cofactor.

It is found in the cell membrane. It catalyses the reaction a 5-methoxy-2-methyl-3-(all-trans-polyprenyl)benzene-1,4-diol + AH2 + O2 = a 3-demethylubiquinol + A + H2O. It functions in the pathway cofactor biosynthesis; ubiquinone biosynthesis. In terms of biological role, catalyzes the hydroxylation of 2-nonaprenyl-3-methyl-6-methoxy-1,4-benzoquinol during ubiquinone biosynthesis. The protein is 3-demethoxyubiquinol 3-hydroxylase of Acidovorax sp. (strain JS42).